A 236-amino-acid polypeptide reads, in one-letter code: Leucyl/phenylalanyl-tRNA--protein transferase (236 aa).

This sequence belongs to the L/F-transferase family.

The protein resides in the cytoplasm. It catalyses the reaction N-terminal L-lysyl-[protein] + L-leucyl-tRNA(Leu) = N-terminal L-leucyl-L-lysyl-[protein] + tRNA(Leu) + H(+). The catalysed reaction is N-terminal L-arginyl-[protein] + L-leucyl-tRNA(Leu) = N-terminal L-leucyl-L-arginyl-[protein] + tRNA(Leu) + H(+). The enzyme catalyses L-phenylalanyl-tRNA(Phe) + an N-terminal L-alpha-aminoacyl-[protein] = an N-terminal L-phenylalanyl-L-alpha-aminoacyl-[protein] + tRNA(Phe). Functionally, functions in the N-end rule pathway of protein degradation where it conjugates Leu, Phe and, less efficiently, Met from aminoacyl-tRNAs to the N-termini of proteins containing an N-terminal arginine or lysine. This Shewanella sediminis (strain HAW-EB3) protein is Leucyl/phenylalanyl-tRNA--protein transferase.